Here is a 538-residue protein sequence, read N- to C-terminus: Protein phosphatase EYA2 (538 aa).

The segment covering 209–230 (HNVPNQSSESLAGEYNTHNGPS) has biased composition (polar residues). Positions 209 to 263 (HNVPNQSSESLAGEYNTHNGPSTPAKEGDTDRPHRASDGKLRGRSKRSSDPSPAG) are disordered. Basic and acidic residues predominate over residues 234 to 249 (KEGDTDRPHRASDGKL). Asp-274 functions as the Nucleophile in the catalytic mechanism. Asp-274, Asp-276, and Asp-502 together coordinate Mg(2+). The active-site Proton donor is the Asp-276.

The protein belongs to the HAD-like hydrolase superfamily. EYA family. Interacts with DACH2 and SIX1, and probably with SIX2, SIX4 and SIX5. Interacts with CAPN8. Interacts with GNAZ and GNAI2; this precludes interaction with SIX1. The cofactor is Mg(2+). Highest expression in muscle with lower levels in kidney, placenta, pancreas, brain and heart.

The protein resides in the cytoplasm. Its subcellular location is the nucleus. The enzyme catalyses O-phospho-L-tyrosyl-[protein] + H2O = L-tyrosyl-[protein] + phosphate. Its function is as follows. Functions both as protein phosphatase and as transcriptional coactivator for SIX1, and probably also for SIX2, SIX4 and SIX5. Tyrosine phosphatase that dephosphorylates 'Tyr-142' of histone H2AX (H2AXY142ph) and promotes efficient DNA repair via the recruitment of DNA repair complexes containing MDC1. 'Tyr-142' phosphorylation of histone H2AX plays a central role in DNA repair and acts as a mark that distinguishes between apoptotic and repair responses to genotoxic stress. Its function as histone phosphatase may contribute to its function in transcription regulation during organogenesis. Plays an important role in hypaxial muscle development together with SIX1 and DACH2; in this it is functionally redundant with EYA1. This Homo sapiens (Human) protein is Protein phosphatase EYA2 (EYA2).